Consider the following 206-residue polypeptide: Small ribosomal subunit protein uS5 (206 aa).

Positions 1–23 (MTDTPTKQENQSKTENPPSSNAN) are enriched in polar residues. The tract at residues 1-52 (MTDTPTKQENQSKTENPPSSNANEQRRGNRNNDRKRNRRGDSKNERDSEWQE) is disordered. Residues 24–52 (EQRRGNRNNDRKRNRRGDSKNERDSEWQE) are compositionally biased toward basic and acidic residues. Positions 50 to 113 (WQERVVQIRR…SDGKKHLVRV (64 aa)) constitute an S5 DRBM domain.

Belongs to the universal ribosomal protein uS5 family. In terms of assembly, part of the 30S ribosomal subunit. Contacts proteins S4 and S8.

In terms of biological role, with S4 and S12 plays an important role in translational accuracy. Located at the back of the 30S subunit body where it stabilizes the conformation of the head with respect to the body. This is Small ribosomal subunit protein uS5 from Prochlorococcus marinus subsp. pastoris (strain CCMP1986 / NIES-2087 / MED4).